A 393-amino-acid chain; its full sequence is tRNA(Met) cytidine acetate ligase (393 aa).

ATP contacts are provided by Gly81, Asn142, and Arg167.

The protein belongs to the TmcAL family.

The protein resides in the cytoplasm. It carries out the reaction cytidine(34) in elongator tRNA(Met) + acetate + ATP = N(4)-acetylcytidine(34) in elongator tRNA(Met) + AMP + diphosphate. Functionally, catalyzes the formation of N(4)-acetylcytidine (ac(4)C) at the wobble position of elongator tRNA(Met), using acetate and ATP as substrates. First activates an acetate ion to form acetyladenylate (Ac-AMP) and then transfers the acetyl group to tRNA to form ac(4)C34. In Bacillus thuringiensis (strain Al Hakam), this protein is tRNA(Met) cytidine acetate ligase.